We begin with the raw amino-acid sequence, 147 residues long: uncharacterized protein (147 aa).

A Response regulatory domain is found at 1 to 59 (MGAELVKWVKSHKIDAHIITFVAKMPYIDSIKLLEAGAKGCVWKTSHPAKLNRAIDSIS). The HTH luxR-type domain occupies 78 to 143 (RYSSDNQLTN…ELIKTALRMG (66 aa)). The H-T-H motif DNA-binding region spans 102-121 (NKEIANFLQLSRKTVETHRL).

In terms of processing, overexpressed protein is phosphorylated in vitro by non-cognate histidine kinases BarA and UhpB.

This is an uncharacterized protein from Escherichia coli (strain K12).